A 316-amino-acid chain; its full sequence is 4-hydroxy-3-methylbut-2-enyl diphosphate reductase (316 aa).

Position 12 (cysteine 12) interacts with [4Fe-4S] cluster. (2E)-4-hydroxy-3-methylbut-2-enyl diphosphate is bound by residues histidine 41 and histidine 74. Residues histidine 41 and histidine 74 each coordinate dimethylallyl diphosphate. 2 residues coordinate isopentenyl diphosphate: histidine 41 and histidine 74. Cysteine 96 serves as a coordination point for [4Fe-4S] cluster. A (2E)-4-hydroxy-3-methylbut-2-enyl diphosphate-binding site is contributed by histidine 124. Residue histidine 124 coordinates dimethylallyl diphosphate. Histidine 124 is a binding site for isopentenyl diphosphate. Glutamate 126 (proton donor) is an active-site residue. Residue threonine 167 participates in (2E)-4-hydroxy-3-methylbut-2-enyl diphosphate binding. Cysteine 197 contacts [4Fe-4S] cluster. Residues serine 225, serine 226, asparagine 227, and serine 269 each coordinate (2E)-4-hydroxy-3-methylbut-2-enyl diphosphate. Positions 225, 226, 227, and 269 each coordinate dimethylallyl diphosphate. Positions 225, 226, 227, and 269 each coordinate isopentenyl diphosphate.

It belongs to the IspH family. In terms of assembly, homodimer. [4Fe-4S] cluster is required as a cofactor.

It catalyses the reaction isopentenyl diphosphate + 2 oxidized [2Fe-2S]-[ferredoxin] + H2O = (2E)-4-hydroxy-3-methylbut-2-enyl diphosphate + 2 reduced [2Fe-2S]-[ferredoxin] + 2 H(+). The enzyme catalyses dimethylallyl diphosphate + 2 oxidized [2Fe-2S]-[ferredoxin] + H2O = (2E)-4-hydroxy-3-methylbut-2-enyl diphosphate + 2 reduced [2Fe-2S]-[ferredoxin] + 2 H(+). Its pathway is isoprenoid biosynthesis; dimethylallyl diphosphate biosynthesis; dimethylallyl diphosphate from (2E)-4-hydroxy-3-methylbutenyl diphosphate: step 1/1. It functions in the pathway isoprenoid biosynthesis; isopentenyl diphosphate biosynthesis via DXP pathway; isopentenyl diphosphate from 1-deoxy-D-xylulose 5-phosphate: step 6/6. In terms of biological role, catalyzes the conversion of 1-hydroxy-2-methyl-2-(E)-butenyl 4-diphosphate (HMBPP) into a mixture of isopentenyl diphosphate (IPP) and dimethylallyl diphosphate (DMAPP). Acts in the terminal step of the DOXP/MEP pathway for isoprenoid precursor biosynthesis. In Enterobacter sp. (strain 638), this protein is 4-hydroxy-3-methylbut-2-enyl diphosphate reductase.